The primary structure comprises 429 residues: Histidine--tRNA ligase (429 aa).

It belongs to the class-II aminoacyl-tRNA synthetase family. Homodimer.

The protein resides in the cytoplasm. It catalyses the reaction tRNA(His) + L-histidine + ATP = L-histidyl-tRNA(His) + AMP + diphosphate + H(+). This is Histidine--tRNA ligase from Cyanothece sp. (strain PCC 7425 / ATCC 29141).